A 582-amino-acid polypeptide reads, in one-letter code: Membrane-bound O-acyltransferase GUP1 (582 aa).

Over 1 to 61 (MVIPRYHLIP…IIKQANPKSR (61 aa)) the chain is Extracellular. The helical transmembrane segment at 62–82 (WSTIEFKFYYLVFLIIVPLMF) threads the bilayer. The Cytoplasmic portion of the chain corresponds to 83-121 (KAGMESANENNPNYPKYEHLLSNGWIFGRKVDNSDQQYR). A helical transmembrane segment spans residues 122–144 (FFRNNFPLLCLLIIIHVGLRRVI). Over 145-158 (NRIIPLSSKRTYFD) the chain is Extracellular. A helical transmembrane segment spans residues 159 to 179 (FIFGIIFLIGAHGVNVLKLSI). Residues 180 to 195 (HLLINYLIGKYIKNYK) are Cytoplasmic-facing. Residues 196–216 (LSLWITWIYGISSLFFNEWYG) form a helical membrane-spanning segment. At 217–294 (NYTLGLSFLS…TAPLPIEDYN (78 aa)) the chain is on the extracellular side. Residues 295–315 (IFNYISYLTYTPLFIAGPILT) traverse the membrane as a helical segment. The Cytoplasmic segment spans residues 316 to 343 (FNDYIYQSNYQQSSSTKDYHRIMMYLIR). The helical transmembrane segment at 344–364 (FIFCLLTLEFILHFMYVVAAS) threads the bilayer. Topologically, residues 365–373 (KTKSWEGNL) are extracellular. The helical transmembrane segment at 374-394 (PFQISMLGMFNLNIIWLKLLI) threads the bilayer. Residues 395–454 (PWRLFRLWSLLDGIDPPENMIRCMDNNFSALAFWRAWHRSYNRWIIRYIYLPMGGGGKYR) are Cytoplasmic-facing. Helical transmembrane passes span 455–475 (ILNSLLVFSFVAIWHDIELKL) and 476–496 (LMWGWLVVLFLIPEISVTMIF). Residue His-469 is part of the active site. Over 497 to 507 (KKYRNQWWYRH) the chain is Cytoplasmic. Residues 508–528 (LCGVGAVINIWMMMIANLVGF) form a helical membrane-spanning segment. Over 529–548 (CLGTDGMWKLLHDLFKTFDG) the chain is Extracellular. Residues 549-569 (VRFLIISSGALFVGAQIMFEI) traverse the membrane as a helical segment. Residues 570–582 (RESEMRKGINVRC) are Cytoplasmic-facing.

The protein belongs to the membrane-bound acyltransferase family.

The protein localises to the cell membrane. The protein resides in the endoplasmic reticulum membrane. It localises to the mitochondrion membrane. In terms of biological role, membrane-bound O-acyltransferase involved in the remodeling of glycosylphosphatidylinositol (GPI) anchors. Acts only on GPI-anchored proteins, but not on free GPI lipids. Also involved in lipid metabolism, having profound effects on sphingolipid-sterol-ordered domains integrity and assembly. Involved in cell integrity and apoptosis. The chain is Membrane-bound O-acyltransferase GUP1 (GUP1) from Candida tropicalis (Yeast).